The chain runs to 605 residues: UvrABC system protein C (605 aa).

Residues 13 to 92 (TSPGVYLMKD…IKKHHPKYNV (80 aa)) form the GIY-YIG domain. Residues 205–240 (SEIIQDLEKSIEKASQEQKFEQAGIYYRTLKLIQQA) enclose the UVR domain.

Belongs to the UvrC family. Interacts with UvrB in an incision complex.

The protein localises to the cytoplasm. Functionally, the UvrABC repair system catalyzes the recognition and processing of DNA lesions. UvrC both incises the 5' and 3' sides of the lesion. The N-terminal half is responsible for the 3' incision and the C-terminal half is responsible for the 5' incision. In Chlamydia caviae (strain ATCC VR-813 / DSM 19441 / 03DC25 / GPIC) (Chlamydophila caviae), this protein is UvrABC system protein C.